Here is a 102-residue protein sequence, read N- to C-terminus: Large ribosomal subunit protein bL21 (102 aa).

The protein belongs to the bacterial ribosomal protein bL21 family. As to quaternary structure, part of the 50S ribosomal subunit. Contacts protein L20.

This protein binds to 23S rRNA in the presence of protein L20. This is Large ribosomal subunit protein bL21 from Exiguobacterium sibiricum (strain DSM 17290 / CCUG 55495 / CIP 109462 / JCM 13490 / 255-15).